Reading from the N-terminus, the 252-residue chain is Fluoroquinolones export permease protein MT2760 (252 aa).

The next 6 helical transmembrane spans lie at 31–51 (VMLVIAPVIWTTGVALLTPLF), 69–89 (LILTAFLLLTSIIVAGALAAF), 119–139 (ATVMVVTTIYVVATMSCSGIL), 148–168 (IPIGLVAGLSAVVTLLLILAV), 176–196 (LAMVRALGMLIAGLPCLPWFI), and 224–244 (TWWPYLVGGAVYNLAIVWVLF).

The complex is composed of 2 ATP-binding proteins and 2 transmembrane proteins.

It localises to the cell membrane. Functionally, part of the ABC transporter complex involved in fluoroquinolones export. Probably responsible for the translocation of the substrate across the membrane. This is Fluoroquinolones export permease protein MT2760 from Mycobacterium tuberculosis (strain CDC 1551 / Oshkosh).